The sequence spans 156 residues: Lipoprotein signal peptidase (156 aa).

Helical transmembrane passes span 52 to 72 and 85 to 105; these read ILEGQMWLFYIITSIVVIGIV and FATALALILGGAIGNFIDRIF. Active-site residues include Asp-111 and Asp-129. A helical membrane pass occupies residues 121–141; that stretch reads NFPIFNVADSALCVGVGILFL.

This sequence belongs to the peptidase A8 family.

Its subcellular location is the cell membrane. The catalysed reaction is Release of signal peptides from bacterial membrane prolipoproteins. Hydrolyzes -Xaa-Yaa-Zaa-|-(S,diacylglyceryl)Cys-, in which Xaa is hydrophobic (preferably Leu), and Yaa (Ala or Ser) and Zaa (Gly or Ala) have small, neutral side chains.. It participates in protein modification; lipoprotein biosynthesis (signal peptide cleavage). This protein specifically catalyzes the removal of signal peptides from prolipoproteins. This Halalkalibacterium halodurans (strain ATCC BAA-125 / DSM 18197 / FERM 7344 / JCM 9153 / C-125) (Bacillus halodurans) protein is Lipoprotein signal peptidase.